A 60-amino-acid polypeptide reads, in one-letter code: Large ribosomal subunit protein bL32 (60 aa).

It belongs to the bacterial ribosomal protein bL32 family.

This Streptococcus pneumoniae serotype 4 (strain ATCC BAA-334 / TIGR4) protein is Large ribosomal subunit protein bL32.